The following is a 76-amino-acid chain: Lividin-2 (76 aa).

The N-terminal stretch at 1–22 (MFTLKKSLLLLFFLGTISLSLC) is a signal peptide. A propeptide spanning residues 23–41 (QEERNADEEDGGEVTEEEV) is cleaved from the precursor. Cys-70 and Cys-76 are oxidised to a cystine.

As to expression, expressed by the skin glands.

Its subcellular location is the secreted. Functionally, antimicrobial peptide. The protein is Lividin-2 of Odorrana livida (Green mountain frog).